A 1109-amino-acid chain; its full sequence is Carbamoyl phosphate synthase large chain (1109 aa).

The tract at residues 1–402 is carboxyphosphate synthetic domain; that stretch reads MPKRTDLKSV…ALQKALRSLE (402 aa). Positions 129, 169, 175, 176, 208, 210, 215, 241, 242, 243, 285, and 299 each coordinate ATP. Positions 133 to 328 constitute an ATP-grasp 1 domain; the sequence is KGVVERCGAE…IAKIATKLSL (196 aa). Mg(2+) contacts are provided by glutamine 285, glutamate 299, and asparagine 301. Residues glutamine 285, glutamate 299, and asparagine 301 each contribute to the Mn(2+) site. The segment at 403–546 is oligomerization domain; the sequence is QKGSQLDFSS…YHYSAYDEED (144 aa). The tract at residues 547–950 is carbamoyl phosphate synthetic domain; it reads EVALHSKPSI…AFAKSQAGAN (404 aa). One can recognise an ATP-grasp 2 domain in the interval 677 to 868; that stretch reads SRVLDKAGLV…MAKAAALIGT (192 aa). Residues arginine 713, arginine 752, leucine 754, glutamate 759, glycine 784, isoleucine 785, histidine 786, serine 787, glutamine 827, and glutamate 839 each contribute to the ATP site. Residues glutamine 827, glutamate 839, and asparagine 841 each contribute to the Mg(2+) site. The Mn(2+) site is built by glutamine 827, glutamate 839, and asparagine 841. One can recognise an MGS-like domain in the interval 951–1096; the sequence is NALPTEGKVF…QEHAAALGES (146 aa). The interval 951 to 1109 is allosteric domain; sequence NALPTEGKVF…AAAKADLQHA (159 aa).

It belongs to the CarB family. Composed of two chains; the small (or glutamine) chain promotes the hydrolysis of glutamine to ammonia, which is used by the large (or ammonia) chain to synthesize carbamoyl phosphate. Tetramer of heterodimers (alpha,beta)4. Mg(2+) serves as cofactor. Requires Mn(2+) as cofactor.

The enzyme catalyses hydrogencarbonate + L-glutamine + 2 ATP + H2O = carbamoyl phosphate + L-glutamate + 2 ADP + phosphate + 2 H(+). The catalysed reaction is hydrogencarbonate + NH4(+) + 2 ATP = carbamoyl phosphate + 2 ADP + phosphate + 2 H(+). The protein operates within amino-acid biosynthesis; L-arginine biosynthesis; carbamoyl phosphate from bicarbonate: step 1/1. It functions in the pathway pyrimidine metabolism; UMP biosynthesis via de novo pathway; (S)-dihydroorotate from bicarbonate: step 1/3. Functionally, large subunit of the glutamine-dependent carbamoyl phosphate synthetase (CPSase). CPSase catalyzes the formation of carbamoyl phosphate from the ammonia moiety of glutamine, carbonate, and phosphate donated by ATP, constituting the first step of 2 biosynthetic pathways, one leading to arginine and/or urea and the other to pyrimidine nucleotides. The large subunit (synthetase) binds the substrates ammonia (free or transferred from glutamine from the small subunit), hydrogencarbonate and ATP and carries out an ATP-coupled ligase reaction, activating hydrogencarbonate by forming carboxy phosphate which reacts with ammonia to form carbamoyl phosphate. The chain is Carbamoyl phosphate synthase large chain from Pseudarthrobacter chlorophenolicus (strain ATCC 700700 / DSM 12829 / CIP 107037 / JCM 12360 / KCTC 9906 / NCIMB 13794 / A6) (Arthrobacter chlorophenolicus).